The sequence spans 154 residues: Ribosome maturation factor RimP (154 aa).

This sequence belongs to the RimP family.

It localises to the cytoplasm. Required for maturation of 30S ribosomal subunits. In Yersinia pseudotuberculosis serotype O:1b (strain IP 31758), this protein is Ribosome maturation factor RimP.